Consider the following 130-residue polypeptide: MAAEQYYGTGRRKTSTARVFLTLGGGKITVNGKTLDEYFGREVARMIVRQPIELTDNVEKFDINVTVKGGGSFGQAGAIRHGLTRALMAYDEAMRPTLRAAGYVTRDAREVERKKVGLRKARKKPQFSKR.

Belongs to the universal ribosomal protein uS9 family.

In Saccharophagus degradans (strain 2-40 / ATCC 43961 / DSM 17024), this protein is Small ribosomal subunit protein uS9.